Reading from the N-terminus, the 417-residue chain is MFDESYTIKNFDDVLFKAISDEKRRQEEHIELIASENYVSPRVLEAQGSVLTNKYAEGYPGKRYYGGCEFVDVAEELAISRAKLLFGAHYVNVQPHSGSQANAAVMMALLSPGDTFMGMALPHGGHLTHGSKVNFSGKLYHSVEYGVDNNTGLIDYDALEKLALQHKPKLIIAGFSAYSRILDWARFREIADKVGAYLMADIAHVAGLVAVGLYPSPVPYADVVTTTTHKTLRGPRGGLILCKENEEIEKKLNSAVFPGMQGGPLMHVIAAKAVAFAEALLPEFKTYQQQVLANARTMCSVLQSRGYDIVSGGTDNHLLLVDLINKGITGKEADAALGRANITVNKNSVPNDPRSPFVTSGLRLGTPAATTRGFKEREITLLSNWVADVLDNVHDETNISRVKTQVLLLCREFPVYA.

(6S)-5,6,7,8-tetrahydrofolate-binding positions include Leu-121 and 125 to 127; that span reads GHL. The residue at position 230 (Lys-230) is an N6-(pyridoxal phosphate)lysine. 355-357 is a binding site for (6S)-5,6,7,8-tetrahydrofolate; that stretch reads SPF.

Belongs to the SHMT family. In terms of assembly, homodimer. Requires pyridoxal 5'-phosphate as cofactor.

It is found in the cytoplasm. It carries out the reaction (6R)-5,10-methylene-5,6,7,8-tetrahydrofolate + glycine + H2O = (6S)-5,6,7,8-tetrahydrofolate + L-serine. It functions in the pathway one-carbon metabolism; tetrahydrofolate interconversion. Its pathway is amino-acid biosynthesis; glycine biosynthesis; glycine from L-serine: step 1/1. In terms of biological role, catalyzes the reversible interconversion of serine and glycine with tetrahydrofolate (THF) serving as the one-carbon carrier. This reaction serves as the major source of one-carbon groups required for the biosynthesis of purines, thymidylate, methionine, and other important biomolecules. Also exhibits THF-independent aldolase activity toward beta-hydroxyamino acids, producing glycine and aldehydes, via a retro-aldol mechanism. The sequence is that of Serine hydroxymethyltransferase from Legionella pneumophila (strain Lens).